Here is a 457-residue protein sequence, read N- to C-terminus: Argininosuccinate lyase (457 aa).

The protein belongs to the lyase 1 family. Argininosuccinate lyase subfamily.

The protein resides in the cytoplasm. It carries out the reaction 2-(N(omega)-L-arginino)succinate = fumarate + L-arginine. It participates in amino-acid biosynthesis; L-arginine biosynthesis; L-arginine from L-ornithine and carbamoyl phosphate: step 3/3. The sequence is that of Argininosuccinate lyase from Psychrobacter arcticus (strain DSM 17307 / VKM B-2377 / 273-4).